We begin with the raw amino-acid sequence, 65 residues long: Large ribosomal subunit protein uL29 (65 aa).

This sequence belongs to the universal ribosomal protein uL29 family.

The sequence is that of Large ribosomal subunit protein uL29 from Parabacteroides distasonis (strain ATCC 8503 / DSM 20701 / CIP 104284 / JCM 5825 / NCTC 11152).